A 107-amino-acid polypeptide reads, in one-letter code: MKMPEKHDLLAAILAAKEQGIGAILAFAMAYLRGRYNGGAFTKTVIDATMCAIIAWFIRDLLDFAGLSSNLAYITSVFIGYIGTDSIGSLIKRFAAKKAGVEDGRNQ.

Methionine 1 is subject to N-formylmethionine. Topologically, residues 1 to 6 (MKMPEK) are periplasmic. Cytoplasmic-side segments run 1-37 (MKMP…GRYN) and 27-35 (FAMAYLRGR). A helical membrane pass occupies residues 7–26 (HDLLAAILAAKEQGIGAILA). A helical transmembrane segment spans residues 38–58 (GGAFTKTVIDATMCAIIAWFI). The Periplasmic portion of the chain corresponds to 59 to 70 (RDLLDFAGLSSN). The helical transmembrane segment at 71–91 (LAYITSVFIGYIGTDSIGSLI) threads the bilayer. The Cytoplasmic segment spans residues 92–107 (KRFAAKKAGVEDGRNQ).

It belongs to the lambdavirus holin family. Homomultimer. Interacts with isoform Antiholin; this interaction blocks the holin homomultimerization and delays host cell lysis.

It is found in the host cell inner membrane. In terms of biological role, accumulates harmlessly in the cytoplasmic membrane until it reaches a critical concentration that triggers the formation of micron-scale pores (holes) causing host cell membrane disruption and endolysin escape into the periplasmic space. Determines the precise timing of host cell lysis. Participates with the endolysin and spanin proteins in the sequential events which lead to the programmed host cell lysis releasing the mature viral particles from the host cell. Functionally, counteracts the aggregation of the holin molecules and thus of pore formation. This chain is Antiholin (S), found in Escherichia phage lambda (Bacteriophage lambda).